Consider the following 186-residue polypeptide: Acireductone dioxygenase (186 aa).

Positions 103, 105, 109, and 147 each coordinate Fe(2+). Ni(2+) contacts are provided by H103, H105, E109, and H147.

This sequence belongs to the acireductone dioxygenase (ARD) family. As to quaternary structure, monomer. It depends on Fe(2+) as a cofactor. Requires Ni(2+) as cofactor.

It catalyses the reaction 1,2-dihydroxy-5-(methylsulfanyl)pent-1-en-3-one + O2 = 3-(methylsulfanyl)propanoate + CO + formate + 2 H(+). It carries out the reaction 1,2-dihydroxy-5-(methylsulfanyl)pent-1-en-3-one + O2 = 4-methylsulfanyl-2-oxobutanoate + formate + 2 H(+). It functions in the pathway amino-acid biosynthesis; L-methionine biosynthesis via salvage pathway; L-methionine from S-methyl-5-thio-alpha-D-ribose 1-phosphate: step 5/6. Catalyzes 2 different reactions between oxygen and the acireductone 1,2-dihydroxy-3-keto-5-methylthiopentene (DHK-MTPene) depending upon the metal bound in the active site. Fe-containing acireductone dioxygenase (Fe-ARD) produces formate and 2-keto-4-methylthiobutyrate (KMTB), the alpha-ketoacid precursor of methionine in the methionine recycle pathway. Ni-containing acireductone dioxygenase (Ni-ARD) produces methylthiopropionate, carbon monoxide and formate, and does not lie on the methionine recycle pathway. This Synechococcus sp. (strain CC9605) protein is Acireductone dioxygenase.